The following is a 299-amino-acid chain: MATH domain and coiled-coil domain-containing protein At2g42460 (299 aa).

The region spanning 7–130 (QKTFTWKIEN…NNTLFIEVYI (124 aa)) is the MATH domain. The stretch at 225–262 (FRVKWLKSKLDEISLARKKKVDADAARVQELEGKVKNQ) forms a coiled coil.

The sequence is that of MATH domain and coiled-coil domain-containing protein At2g42460 from Arabidopsis thaliana (Mouse-ear cress).